Consider the following 170-residue polypeptide: Large ribosomal subunit protein uL15 (170 aa).

Residues 1–12 show a composition bias toward basic and acidic residues; sequence MKLHDLRPAEGS. The interval 1 to 50 is disordered; the sequence is MKLHDLRPAEGSHRKRKRIGRGHGSGKVKTGGKGMMGQKARSGPGPYRTF. The span at 13–26 shows a compositional bias: basic residues; sequence HRKRKRIGRGHGSG.

This sequence belongs to the universal ribosomal protein uL15 family. As to quaternary structure, part of the 50S ribosomal subunit.

In terms of biological role, binds to the 23S rRNA. This chain is Large ribosomal subunit protein uL15, found in Chloroflexus aggregans (strain MD-66 / DSM 9485).